A 426-amino-acid polypeptide reads, in one-letter code: MLDSKLLRTQLQDVADRLASRGFTLDVARIESLEAQRKVVQTRTEQLQAERNARSKSIGQAKQRGEDIAPLMADVERMGNELSEGKVELDGIQAELDALVLSIPNLPHESVPVGADEEGNVEVRRWGTPTSFDFEVKDHVALGEKFGWLDFETAAKLSGARFALLRGPIARLHRALAQFMINLHINEHGYEETYTPYLVQAPALQGTGQLPKFEEDLFKISREGEADLYLIPTAEVSLTNIVSGEILDAKQLPLKFVAHTPCFRSEAGASGRDTRGMIRQHQFDKVEMVQIVAPDDSMAALESLTGNAERVLQLLELPYRTLALCTGDMGFSAVKTYDLEVWIPSQDKYREISSCSNCGDFQARRMQARWRNPETGKPELVHTLNGSGLAVGRTLVAVLENYQQADGSIRVPEVLKPYMGGLEVIG.

233-235 (TAE) is an L-serine binding site. 264–266 (RSE) contacts ATP. Glutamate 287 contacts L-serine. 351–354 (EISS) is a binding site for ATP. Serine 387 is an L-serine binding site.

It belongs to the class-II aminoacyl-tRNA synthetase family. Type-1 seryl-tRNA synthetase subfamily. In terms of assembly, homodimer. The tRNA molecule binds across the dimer.

Its subcellular location is the cytoplasm. It carries out the reaction tRNA(Ser) + L-serine + ATP = L-seryl-tRNA(Ser) + AMP + diphosphate + H(+). The catalysed reaction is tRNA(Sec) + L-serine + ATP = L-seryl-tRNA(Sec) + AMP + diphosphate + H(+). The protein operates within aminoacyl-tRNA biosynthesis; selenocysteinyl-tRNA(Sec) biosynthesis; L-seryl-tRNA(Sec) from L-serine and tRNA(Sec): step 1/1. Its function is as follows. Catalyzes the attachment of serine to tRNA(Ser). Is also able to aminoacylate tRNA(Sec) with serine, to form the misacylated tRNA L-seryl-tRNA(Sec), which will be further converted into selenocysteinyl-tRNA(Sec). This is Serine--tRNA ligase from Pseudomonas syringae pv. syringae (strain B728a).